We begin with the raw amino-acid sequence, 173 residues long: Protein tyrosine phosphatase type IVA 3 (173 aa).

Residues 8 to 161 enclose the Tyrosine-protein phosphatase domain; that stretch reads APVEVSYKNM…YRPKQRLRFK (154 aa). Cys-49 and Cys-104 are disulfide-bonded. Asp-72 functions as the Proton donor in the catalytic mechanism. Residue Cys-104 is the Phosphocysteine intermediate of the active site. Arg-110 is a binding site for substrate. The residue at position 170 (Cys-170) is a Cysteine methyl ester. Cys-170 carries S-farnesyl cysteine lipidation. Residues 171–173 constitute a propeptide, removed in mature form; that stretch reads CIM.

The protein belongs to the protein-tyrosine phosphatase family. Interacts with tubulin. Farnesylated. Farnesylation is required for membrane targeting. Unfarnesylated forms are shifted into the nucleus.

The protein resides in the cell membrane. It localises to the early endosome. The enzyme catalyses O-phospho-L-tyrosyl-[protein] + H2O = L-tyrosyl-[protein] + phosphate. Its activity is regulated as follows. Inhibited by sodium orthovanadate and peroxovanadium compounds, and by pentamidine. Protein tyrosine phosphatase which stimulates progression from G1 into S phase during mitosis. Enhances cell proliferation, cell motility and invasive activity, and promotes cancer metastasis. May be involved in the progression of cardiac hypertrophy by inhibiting intracellular calcium mobilization in response to angiotensin II. This chain is Protein tyrosine phosphatase type IVA 3 (PTP4A3), found in Bos taurus (Bovine).